Here is a 130-residue protein sequence, read N- to C-terminus: Small ribosomal subunit protein uS11 (130 aa).

This sequence belongs to the universal ribosomal protein uS11 family. As to quaternary structure, part of the 30S ribosomal subunit.

In terms of biological role, located on the platform of the 30S subunit. The protein is Small ribosomal subunit protein uS11 of Ignicoccus hospitalis (strain KIN4/I / DSM 18386 / JCM 14125).